A 92-amino-acid chain; its full sequence is Putative lambdoid prophage defective integrase (92 aa).

It belongs to the 'phage' integrase family.

This chain is Putative lambdoid prophage defective integrase (intG), found in Escherichia coli O157:H7.